An 85-amino-acid chain; its full sequence is Insecticidal toxin Vn1 (85 aa).

The N-terminal stretch at 1–23 is a signal peptide; that stretch reads MFLYRLICLFILICIITVDISTS. A disulfide bridge connects residues C71 and C84.

In terms of tissue distribution, highly expressed in the venom apparatus, and weakly expressed in residual body.

It is found in the secreted. In terms of biological role, endoparasitoid venom toxin that exhibits insecticidal activity against Tenebrio molitor pupae. Impacts genes related to immune response, environmental information processing, metabolism, and response to external stimuli in T.molitor, suggesting its involvement in the intricate parasitoid wasp-host interaction. The sequence is that of Insecticidal toxin Vn1 from Aphidius gifuensis (Parasitoid wasp).